The primary structure comprises 101 residues: Putative defensin-like protein 86 (101 aa).

Residues 1–27 (MAITKMSSLIILSLMMLTFIYIPMISG) form the signal peptide. 4 disulfides stabilise this stretch: cysteine 35–cysteine 71, cysteine 39–cysteine 59, cysteine 45–cysteine 69, and cysteine 49–cysteine 70.

Belongs to the DEFL family.

Its subcellular location is the secreted. The protein is Putative defensin-like protein 86 (LCR82) of Arabidopsis thaliana (Mouse-ear cress).